Reading from the N-terminus, the 202-residue chain is V-type proton ATPase subunit E (202 aa).

It belongs to the V-ATPase E subunit family.

Its function is as follows. Produces ATP from ADP in the presence of a proton gradient across the membrane. In Halothermothrix orenii (strain H 168 / OCM 544 / DSM 9562), this protein is V-type proton ATPase subunit E.